The primary structure comprises 374 residues: 1,3,6,8-tetrahydroxynaphthalene synthase (374 aa).

Residue cysteine 138 is part of the active site.

This sequence belongs to the thiolase-like superfamily. Chalcone/stilbene synthases family. As to quaternary structure, homodimer.

It catalyses the reaction 5 malonyl-CoA + 5 H(+) = naphthalene-1,3,6,8-tetrol + 5 CO2 + 5 CoA + H2O. It participates in pigment biosynthesis; melanin biosynthesis. In terms of biological role, involved in the biosynthesis of melanin but also various secondary metabolites containing a naphthoquinone ring. Catalyzes the iterative condensation of five CoA-linked malonyl units to form a pentaketide intermediate. THNS subsequently catalyzes the dual intramolecular Claisen and aldol condensations of this linear intermediate to produce the fused ring of 1,3,6,8-tetrahydroxynaphthalene (THN). This chain is 1,3,6,8-tetrahydroxynaphthalene synthase, found in Streptomyces coelicolor (strain ATCC BAA-471 / A3(2) / M145).